The primary structure comprises 86 residues: Palustrin-3b (86 aa).

Residues 1–22 (MFTLKKPLLLIVLLGIISLSLC) form the signal peptide. The propeptide occupies 23–36 (EQERNADEDEESEI). Residues cysteine 81 and cysteine 86 are joined by a disulfide bond.

In terms of tissue distribution, expressed by the skin glands.

The protein resides in the secreted. Its function is as follows. Antimicrobial peptide. The chain is Palustrin-3b from Odorrana versabilis (Chinese bamboo leaf odorous frog).